Here is a 1984-residue protein sequence, read N- to C-terminus: Sodium channel protein type 9 subunit alpha (1984 aa).

Topologically, residues 1 to 125 (MAMLPPPGPQ…RRISIKILVH (125 aa)) are cytoplasmic. The segment covering 26–47 (RIAEGKTKEPKEEKKDDHDEGP) has biased composition (basic and acidic residues). The disordered stretch occupies residues 26–55 (RIAEGKTKEPKEEKKDDHDEGPKPSSDLEA). An I repeat occupies 112–408 (FSPLRRISIK…VAMAYEEQNQ (297 aa)). The helical transmembrane segment at 126 to 145 (SLFSMLIMCTILTNCIFMTM) threads the bilayer. Over 146-150 (NNPAE) the chain is Extracellular. A helical transmembrane segment spans residues 151–172 (WTKNVEYTFTGIYTFESLVKIF). The Cytoplasmic segment spans residues 173-185 (ARGFCVGEFTFLR). The chain crosses the membrane as a helical span at residues 186-204 (DPWNWLDFIVIVFAYLTEF). The Extracellular portion of the chain corresponds to 205–210 (VNLGNV). Residue asparagine 209 is glycosylated (N-linked (GlcNAc...) asparagine). The helical transmembrane segment at 211–227 (SALRTFRVLRALKTISV) threads the bilayer. Residues 228–241 (IPGLKTIVGALIQS) are Cytoplasmic-facing. The helical transmembrane segment at 242–267 (VKKLSDVIILTVFCLSVFALIGLQLF) threads the bilayer. Over 268–344 (MGHLKHKCLR…PDYGYTSFDT (77 aa)) the chain is Extracellular. An intrachain disulfide couples cysteine 275 to cysteine 322. Asparagine 281 carries an N-linked (GlcNAc...) asparagine glycan. An intramembrane region (pore-forming) is located at residues 345–361 (FSWAFLALFRLMTQDYW). Topologically, residues 362-374 (ENLYQQTLRAAGK) are extracellular. Residues 375 to 400 (TYMIFFVVVIFLGSFYLINLILAVVA) traverse the membrane as a helical segment. Topologically, residues 401–742 (MAYEEQNQAN…FIYIIVMDPF (342 aa)) are cytoplasmic. Low complexity predominate over residues 459–469 (SSSETSKLSSK). 2 disordered regions span residues 459–517 (SSSE…LGVE) and 563–610 (GSET…PPML). Residues 472-484 (KERRNRRKKKNQK) show a composition bias toward basic residues. 2 stretches are compositionally biased toward basic and acidic residues: residues 487-508 (SSGEEKGDDEKLSKSESEESIS) and 571-583 (DEHSIFGDNESRR). The II repeat unit spans residues 723–986 (CSPFWIKFKK…EEDTDANNLQ (264 aa)). Residues 743–759 (VDLAITICIVLNTLFMA) form a helical membrane-spanning segment. Residues 760–768 (MEHHPMTEE) lie on the Extracellular side of the membrane. Residues 769-793 (FKNVLVVGNLVFTGIFAAEMVLKLI) traverse the membrane as a helical segment. At 794–802 (AMDPYEYFQ) the chain is on the cytoplasmic side. The chain crosses the membrane as a helical span at residues 803 to 819 (VGWNVFDSLIVTLSLVE). The Extracellular segment spans residues 820-828 (LFLADVEGL). The helical transmembrane segment at 829–845 (SVLRSFRLLRVFKLAKS) threads the bilayer. Residues 846 to 862 (WPTLNMLIKIIGNSVGP) lie on the Cytoplasmic side of the membrane. The chain crosses the membrane as a helical span at residues 863 to 885 (LGNLTLVLAIIVFIFAVVGMQLF). At 886-912 (GKSYKECVCKINDDCSLPRWHMNDFFH) the chain is on the extracellular side. A disulfide bond links cysteine 894 and cysteine 900. An intramembrane region (pore-forming) is located at residues 913-925 (SFLIVFRVLCGEW). Topologically, residues 926-937 (IETMWDCMEVAG) are extracellular. A disulfide bridge connects residues cysteine 932 and cysteine 941. Residues 938-964 (QAMCLIVYMMVMVIGNLVVLNLFLALL) traverse the membrane as a helical segment. The Cytoplasmic portion of the chain corresponds to 965–1184 (LSSFSSDNLS…WWNIRKTCYR (220 aa)). The segment at 1087 to 1146 (PIAPGESDLENMNTEELSSDSESEYSKERLNRSSSSECSTVDNALPGEGEEAEAEPVNSD) is disordered. Over residues 1118–1128 (RSSSSECSTVD) the composition is skewed to polar residues. Residues 1134–1146 (EGEEAEAEPVNSD) are compositionally biased toward acidic residues. The stretch at 1177–1485 (NIRKTCYRIV…KKYYNAMKKL (309 aa)) is one III repeat. The helical transmembrane segment at 1185–1209 (IVEHSWFESFIVLMILLSSGALAFE) threads the bilayer. Over 1210–1221 (DIYIEKKKTIKI) the chain is Extracellular. The chain crosses the membrane as a helical span at residues 1222–1247 (ILEYADKIFTYIFILEMLLKWVAYGY). Residues 1248-1249 (KT) are Cytoplasmic-facing. Residues 1250–1275 (YFTNAWCWLDFLIVDVSLVTLVANTL) traverse the membrane as a helical segment. Topologically, residues 1276–1284 (GYSDLGPIK) are extracellular. Residues 1285-1301 (SLRTLRALRPLRALSRF) form a helical membrane-spanning segment. Residues 1302 to 1314 (EGMRVVVNALIGA) lie on the Cytoplasmic side of the membrane. The chain crosses the membrane as a helical span at residues 1315-1339 (IPSIMNVLLVCLIFWLIFSIMGVNL). Over 1340–1391 (FAGKFYQCVNTTDDSRFPTKQVSNRSECFALMNGSQNVRWKNLKVNFDNVGL) the chain is Extracellular. A disulfide bridge links cysteine 1347 with cysteine 1367. Asparagine 1349, asparagine 1363, and asparagine 1372 each carry an N-linked (GlcNAc...) asparagine glycan. An intramembrane region (pore-forming) is located at residues 1392 to 1402 (RYLSLLQVATF). At 1403–1428 (KGWMDIMYAAVDSVNVDQQPSYEHNL) the chain is on the extracellular side. Residues 1429 to 1454 (YMYIYFVIFIIFGSFFTLNLFIGVII) traverse the membrane as a helical segment. The Cytoplasmic portion of the chain corresponds to 1455-1511 (DNFNQQKKKLGGQDIFMTEEQKKYYNAMKKLGSKKPQKPIPRPGNKFQGCIFDLVTN). Position 1487 is a phosphoserine; by PKC (serine 1487). Residues 1494–1792 (IPRPGNKFQG…WEKFDPDATQ (299 aa)) form an IV repeat. Residues 1512–1531 (QAFDITIMILICLNMVTMMV) form a helical membrane-spanning segment. Over 1532–1542 (EKEGQSDYMTD) the chain is Extracellular. A helical membrane pass occupies residues 1543-1564 (VLYWINVVFIILFTGECVLKLI). Over 1565–1573 (SLRHYYFTI) the chain is Cytoplasmic. The helical transmembrane segment at 1574-1595 (GWNIFDFVVVILSIVGMFLAEL) threads the bilayer. The Extracellular portion of the chain corresponds to 1596-1604 (IETYFVSPT). A helical transmembrane segment spans residues 1605 to 1624 (LFRVIRLARIGRILRLIKGA). Topologically, residues 1625 to 1637 (KGIRTLLFALMMS) are cytoplasmic. Residues 1638–1660 (LPALFNIGLLLFLVMFIYAIFGM) traverse the membrane as a helical segment. Over 1661 to 1683 (SNFAYVKKEAGINDMFNFETFGN) the chain is Extracellular. An intramembrane region (pore-forming) is located at residues 1684–1696 (SMICLFQITTSAG). Topologically, residues 1697–1730 (WDGLLAPILNSAPPDCDPKKVHPGSSTEGDCGSP) are extracellular. Cysteines 1712 and 1727 form a disulfide. The chain crosses the membrane as a helical span at residues 1731-1756 (SVGIFYFVSYIIISFLVVVNMYIAVI). At 1757–1984 (LENFSVATEE…KGKDGKETKK (228 aa)) the chain is on the cytoplasmic side. In terms of domain architecture, IQ spans 1886–1915 (EDVSATVIQRAYRRYRLRQNVKNISSIYIK). Residues 1924-1984 (PNKGDIVFDN…KGKDGKETKK (61 aa)) are disordered. Over residues 1933-1956 (NVNSSSPEKTDATASTISPPSYDS) the composition is skewed to polar residues. Residues 1958–1984 (TKPDKEKYEKDKTEKEDKGKDGKETKK) show a composition bias toward basic and acidic residues.

The protein belongs to the sodium channel (TC 1.A.1.10) family. Nav1.7/SCN9A subfamily. The Nav1.7 voltage-gated sodium channel consists of an ion-conducting alpha subunit SCN9A which is functional on its own regulated by one or more beta-1 (SCN1B), beta-2 (SCN2B), beta-3 (SCN3B) and beta-4 (SCN4B) subunits. SCN1B and SCN3B are non-covalently associated with SCN9A. SCN2B and SCN4B are disulfide-linked to SCN9A. SCN1B regulates channel inactivation. Interacts with NEDD4 and NEDD4L; regulates Nav1.7 activity most probably through ubiquitination and subsequent endocytosis. Interacts with TMEM233; modulates the gating properties of NaV1.7. Post-translationally, phosphorylation at Ser-1487 by PKC in a highly conserved cytoplasmic loop increases peak sodium currents. Ubiquitinated by NEDD4L; which may promote its endocytosis. As to expression, expressed in the sciatic nerve, spinal cord, brainstem, cerebellum and cortex, but not expressed in the lung, skeletal and cardiac muscles, kidney and liver.

The protein localises to the cell membrane. The protein resides in the cell projection. It is found in the neuron projection. It localises to the axon. The catalysed reaction is Na(+)(in) = Na(+)(out). Pore-forming subunit of Nav1.7, a voltage-gated sodium (Nav) channel that directly mediates the depolarizing phase of action potentials in excitable membranes. Navs, also called VGSCs (voltage-gated sodium channels) or VDSCs (voltage-dependent sodium channels), operate by switching between closed and open conformations depending on the voltage difference across the membrane. In the open conformation they allow Na(+) ions to selectively pass through the pore, along their electrochemical gradient. The influx of Na(+) ions provokes membrane depolarization, initiating the propagation of electrical signals throughout cells and tissues. Nav1.7 plays a crucial role in controlling the excitability and action potential propagation from nociceptor neurons, thereby contributing to the sensory perception of pain. The sequence is that of Sodium channel protein type 9 subunit alpha from Oryctolagus cuniculus (Rabbit).